Consider the following 205-residue polypeptide: Large ribosomal subunit protein uL4 (205 aa).

The segment at 44-79 (RAGTKAQKTRREVSGSGAKPWRQKGTGRARAGSSRS) is disordered.

This sequence belongs to the universal ribosomal protein uL4 family. As to quaternary structure, part of the 50S ribosomal subunit.

Functionally, one of the primary rRNA binding proteins, this protein initially binds near the 5'-end of the 23S rRNA. It is important during the early stages of 50S assembly. It makes multiple contacts with different domains of the 23S rRNA in the assembled 50S subunit and ribosome. Its function is as follows. Forms part of the polypeptide exit tunnel. The polypeptide is Large ribosomal subunit protein uL4 (Coxiella burnetii (strain Dugway 5J108-111)).